Consider the following 158-residue polypeptide: uncharacterized protein (158 aa).

In terms of domain architecture, HTH asnC-type spans 12-73; that stretch reads LDEIDRAILR…LINPFKAGYE (62 aa). The H-T-H motif DNA-binding region spans 31 to 50; that stretch reads YSEISRRINVPESTVRARVN.

This is an uncharacterized protein from Pyrococcus horikoshii (strain ATCC 700860 / DSM 12428 / JCM 9974 / NBRC 100139 / OT-3).